Here is a 429-residue protein sequence, read N- to C-terminus: Argininosuccinate lyase (429 aa).

Belongs to the lyase 1 family. Argininosuccinate lyase subfamily.

The protein resides in the cytoplasm. The catalysed reaction is 2-(N(omega)-L-arginino)succinate = fumarate + L-arginine. Its pathway is amino-acid biosynthesis; L-arginine biosynthesis; L-arginine from L-ornithine and carbamoyl phosphate: step 3/3. The sequence is that of Argininosuccinate lyase from Pyrobaculum islandicum (strain DSM 4184 / JCM 9189 / GEO3).